We begin with the raw amino-acid sequence, 187 residues long: MSLINTKIKPFKNQAFKNGEFIEITEKDTEGRWSVFFFYPADFTFVCPTELGDVADHYEELQKLGVDVYAVSTDTHFTHKAWHSSSETIAKIKYAMIGDPTGALTRNFDNMREDEGLADRATFVVDPQGIIQAIEVTAEGIGRDASDLLRKIKAAQYVASHPGEVCPAKWKEGEATLAPSLDLVGKI.

One can recognise a Thioredoxin domain in the interval 2–157 (SLINTKIKPF…LLRKIKAAQY (156 aa)). K17 is subject to N6-acetyllysine. The Cysteine sulfenic acid (-SOH) intermediate role is filled by C47. K93, K153, K169, and K171 each carry N6-acetyllysine.

Belongs to the peroxiredoxin family. AhpC/Prx1 subfamily. In terms of assembly, homodimer; disulfide-linked, upon oxidation. 5 homodimers assemble to form a ring-like decamer.

Its subcellular location is the cytoplasm. The enzyme catalyses a hydroperoxide + NADH + H(+) = an alcohol + NAD(+) + H2O. Its function is as follows. Thiol-specific peroxidase that catalyzes the reduction of hydrogen peroxide and organic hydroperoxides to water and alcohols, respectively. Plays a role in cell protection against oxidative stress by detoxifying peroxides. This chain is Alkyl hydroperoxide reductase C (ahpC), found in Shigella flexneri.